The primary structure comprises 219 residues: Protein matrimony (219 aa).

Residues 74–99 (PPAKAHPHPHQHQHHHHHHKHIHRTQ) are compositionally biased toward basic residues. Residues 74 to 104 (PPAKAHPHPHQHQHHHHHHKHIHRTQLKPPP) are disordered. In terms of domain architecture, SAM spans 159-219 (NHAANVEQIL…NRIMDVLQTL (61 aa)).

Interacts with polo. Interacts with cort. Probably ubiquitinated: degraded during the oocyte-to-embryo transition by the anaphase promoting complex/cyclosome (APC/C) containing cort protein.

Its subcellular location is the nucleus. The protein resides in the chromosome. Polo kinase inhibitor required to maintain G2 arrest in the meiotic cell cycle in females. Holds heterochromatically paired homologs together from the end of pachytene until metaphase I. Haploinsufficient locus for homologous achiasmate segregation and may be required for the maintenance of heterochromatic pairings. This Drosophila yakuba (Fruit fly) protein is Protein matrimony (mtrm).